The chain runs to 158 residues: 2-C-methyl-D-erythritol 2,4-cyclodiphosphate synthase (158 aa).

Positions 9 and 11 each coordinate a divalent metal cation. Residues 9 to 11 and 35 to 36 contribute to the 4-CDP-2-C-methyl-D-erythritol 2-phosphate site; these read DVH and HS. A divalent metal cation is bound at residue histidine 43. 4-CDP-2-C-methyl-D-erythritol 2-phosphate-binding positions include 57-59, 62-66, 133-136, phenylalanine 140, and arginine 143; these read DIG, FPDTD, and TTTE.

This sequence belongs to the IspF family. Homotrimer. A divalent metal cation is required as a cofactor.

The enzyme catalyses 4-CDP-2-C-methyl-D-erythritol 2-phosphate = 2-C-methyl-D-erythritol 2,4-cyclic diphosphate + CMP. The protein operates within isoprenoid biosynthesis; isopentenyl diphosphate biosynthesis via DXP pathway; isopentenyl diphosphate from 1-deoxy-D-xylulose 5-phosphate: step 4/6. Functionally, involved in the biosynthesis of isopentenyl diphosphate (IPP) and dimethylallyl diphosphate (DMAPP), two major building blocks of isoprenoid compounds. Catalyzes the conversion of 4-diphosphocytidyl-2-C-methyl-D-erythritol 2-phosphate (CDP-ME2P) to 2-C-methyl-D-erythritol 2,4-cyclodiphosphate (ME-CPP) with a corresponding release of cytidine 5-monophosphate (CMP). In Actinobacillus pleuropneumoniae serotype 7 (strain AP76), this protein is 2-C-methyl-D-erythritol 2,4-cyclodiphosphate synthase.